A 121-amino-acid chain; its full sequence is Small ribosomal subunit protein uS13 (121 aa).

The tract at residues 92–121 is disordered; it reads RKGLPVRGQSSKTNARTVKGPRKTVANKKK. Over residues 110 to 121 the composition is skewed to basic residues; it reads KGPRKTVANKKK.

This sequence belongs to the universal ribosomal protein uS13 family. Part of the 30S ribosomal subunit. Forms a loose heterodimer with protein S19. Forms two bridges to the 50S subunit in the 70S ribosome.

Its function is as follows. Located at the top of the head of the 30S subunit, it contacts several helices of the 16S rRNA. In the 70S ribosome it contacts the 23S rRNA (bridge B1a) and protein L5 of the 50S subunit (bridge B1b), connecting the 2 subunits; these bridges are implicated in subunit movement. Contacts the tRNAs in the A and P-sites. In Mycoplasma mycoides subsp. mycoides SC (strain CCUG 32753 / NCTC 10114 / PG1), this protein is Small ribosomal subunit protein uS13.